Reading from the N-terminus, the 174-residue chain is UPF0340 protein SAB1998c (174 aa).

It belongs to the UPF0340 family.

This is UPF0340 protein SAB1998c from Staphylococcus aureus (strain bovine RF122 / ET3-1).